Reading from the N-terminus, the 2238-residue chain is Protein Ycf2 (2238 aa).

Residue 1579 to 1586 (GSIGTGRS) coordinates ATP.

Belongs to the Ycf2 family.

The protein localises to the plastid. In terms of biological role, probable ATPase of unknown function. Its presence in a non-photosynthetic plant (Epifagus virginiana) and experiments in tobacco indicate that it has an essential function which is probably not related to photosynthesis. The protein is Protein Ycf2 of Cuscuta exaltata (Tall dodder).